The sequence spans 282 residues: Bifunctional protein FolD (282 aa).

NADP(+) contacts are provided by residues 165-167 and I231; that span reads GAS.

Belongs to the tetrahydrofolate dehydrogenase/cyclohydrolase family. Homodimer.

The catalysed reaction is (6R)-5,10-methylene-5,6,7,8-tetrahydrofolate + NADP(+) = (6R)-5,10-methenyltetrahydrofolate + NADPH. It catalyses the reaction (6R)-5,10-methenyltetrahydrofolate + H2O = (6R)-10-formyltetrahydrofolate + H(+). It participates in one-carbon metabolism; tetrahydrofolate interconversion. In terms of biological role, catalyzes the oxidation of 5,10-methylenetetrahydrofolate to 5,10-methenyltetrahydrofolate and then the hydrolysis of 5,10-methenyltetrahydrofolate to 10-formyltetrahydrofolate. This is Bifunctional protein FolD from Francisella philomiragia subsp. philomiragia (strain ATCC 25017 / CCUG 19701 / FSC 153 / O#319-036).